The following is a 239-amino-acid chain: Serine protease SplC (239 aa).

A signal peptide spans 1–36 (MNKNIVIKSMAALAILTSVTGINAAVVEETQQIANA). Catalysis depends on charge relay system residues H75, D113, and S193.

The protein belongs to the peptidase S1B family.

It localises to the secreted. This chain is Serine protease SplC (splC), found in Staphylococcus aureus.